A 158-amino-acid chain; its full sequence is Large ribosomal subunit protein uL30 (158 aa).

It belongs to the universal ribosomal protein uL30 family. In terms of assembly, part of the 50S ribosomal subunit.

The protein is Large ribosomal subunit protein uL30 of Saccharolobus solfataricus (strain ATCC 35092 / DSM 1617 / JCM 11322 / P2) (Sulfolobus solfataricus).